A 143-amino-acid polypeptide reads, in one-letter code: Mini-ribonuclease 3 (143 aa).

The active site involves aspartate 23.

This sequence belongs to the MrnC RNase family. Homodimer. The cofactor is Mg(2+).

The protein localises to the cytoplasm. Involved in correct processing of both the 5' and 3' ends of 23S rRNA precursor. Processes 30S rRNA precursor transcript even in absence of ribonuclease 3 (Rnc); Rnc processes 30S rRNA into smaller rRNA precursors. Cleaves more efficiently on assembled 50S ribosomal subunits. Cleavage is strongly stimulated by ribosomal protein L3 (RplC); 20-30% DMSO can replace RplC, suggesting RplC may alter rRNA conformation. This Bacillus subtilis (strain 168) protein is Mini-ribonuclease 3 (mrnC).